Here is a 355-residue protein sequence, read N- to C-terminus: Tryptophan--tRNA ligase (355 aa).

ATP is bound by residues 13–15 (QPT) and 21–22 (GN). The short motif at 14 to 22 (PTGNLHLGN) is the 'HIGH' region element. An L-tryptophan-binding site is contributed by Asp-137. ATP is bound by residues 149–151 (GED), Ile-208, and 217–221 (KMSKS). The 'KMSKS' region motif lies at 217-221 (KMSKS).

The protein belongs to the class-I aminoacyl-tRNA synthetase family. In terms of assembly, homodimer.

Its subcellular location is the cytoplasm. It catalyses the reaction tRNA(Trp) + L-tryptophan + ATP = L-tryptophyl-tRNA(Trp) + AMP + diphosphate + H(+). In terms of biological role, catalyzes the attachment of tryptophan to tRNA(Trp). This is Tryptophan--tRNA ligase from Brucella melitensis biotype 1 (strain ATCC 23456 / CCUG 17765 / NCTC 10094 / 16M).